The chain runs to 3149 residues: Large tegument protein deneddylase (3149 aa).

The span at 1 to 13 (MSNGDWGQSQRTR) shows a compositional bias: polar residues. The disordered stretch occupies residues 1 to 30 (MSNGDWGQSQRTRGTGPVRGIRTMDVNAPG). The interval 1 to 268 (MSNGDWGQSQ…YEANGSGFDL (268 aa)) is deubiquitination activity. In terms of domain architecture, Peptidase C76 spans 41–258 (LGTASCNQAH…MLEHYGVYDF (218 aa)). Catalysis depends on residues Cys61, Asp193, and His195. Positions 319 to 341 (PAARYSPAKTNSPPSSPASAAPA) are disordered. 8 consecutive repeat copies span residues 335–339 (PASAA), 340–344 (PASAA), 345–349 (PASAA), 350–354 (PASAA), 355–359 (PASAA), 360–364 (PASAA), 365–369 (PASAA), and 370–374 (PASAA). Residues 335-374 (PASAAPASAAPASAAPASAAPASAAPASAAPASAAPASAA) are 8 X 5 AA repeats of P-A-S-A-A. Disordered regions lie at residues 382–656 (FIPI…GSGL), 901–923 (LLSG…SIYR), 1143–1166 (APIS…TPPL), 1412–1434 (GRKE…RARE), 1644–1677 (PEAT…SALW), 2583–2839 (GLVS…PTAV), 2852–2981 (AAAS…PGAR), and 2995–3019 (QTYT…KCKD). Over residues 462–483 (LPPPVIPIPHQSPPASPTPHPA) the composition is skewed to pro residues. Composition is skewed to low complexity over residues 509 to 536 (AAPS…TTTL) and 544 to 564 (QPPQ…QPTP). Positions 554–584 (SPLLPQQQPTPSAAPAPSPLLPQQQPPPSAA) are interaction with inner tegument protein. A compositionally biased stretch (pro residues) spans 565-609 (SAAPAPSPLLPQQQPPPSAARAPSPLPPQQQPLPSATPAPPPAQQ). Low complexity predominate over residues 1143–1155 (APISPASPSATPA). Polar residues predominate over residues 2592–2603 (SADNTPASSDRL). Residues 2711–2720 (QPAPQQPPSS) show a composition bias toward pro residues. 2 stretches are compositionally biased toward polar residues: residues 2734 to 2745 (SPHSTPSTASGS) and 2784 to 2804 (SAAS…SSQD). Over residues 2812-2827 (MQREKKQQGGREEAAE) the composition is skewed to basic and acidic residues. Residues 2874-2885 (APALGSGLAAPA) are compositionally biased toward low complexity.

This sequence belongs to the herpesviridae large tegument protein family. Interacts with host CUL1 and CUL4A; these interactions inhibit the E3 ligase activity of cullins. Interacts with inner tegument protein. Interacts with capsid vertex specific component CVC2. Interacts with the major capsid protein/MCP. Interacts with host TRIM25 and YWHAZ.

It localises to the virion tegument. The protein localises to the host cytoplasm. The protein resides in the host nucleus. It carries out the reaction Thiol-dependent hydrolysis of ester, thioester, amide, peptide and isopeptide bonds formed by the C-terminal Gly of ubiquitin (a 76-residue protein attached to proteins as an intracellular targeting signal).. In terms of biological role, large tegument protein that plays multiple roles in the viral cycle. During viral entry, remains associated with the capsid while most of the tegument is detached and participates in the capsid transport toward the host nucleus. Plays a role in the routing of the capsid at the nuclear pore complex and subsequent uncoating. Within the host nucleus, acts as a deneddylase and promotes the degradation of nuclear CRLs (cullin-RING ubiquitin ligases) and thereby stabilizes nuclear CRL substrates, while cytoplasmic CRLs remain unaffected. These modifications prevent host cell cycle S-phase progression and create a favorable environment allowing efficient viral genome replication. Participates later in the secondary envelopment of capsids. Indeed, plays a linker role for the association of the outer viral tegument to the capsids together with the inner tegument protein. Counteracts host TLR-mediated NF-kappa-B activation through both MYD88 and TICAM1-dependent pathways by interfering with 'Lys-63'- and 'Lys-48'-linked ubiquitination of signaling intermediates such as TRAF6 and IKBKG. Inhibits type I interferon production by forming a tri-molecular complex with host TRIM25 and 14-3-3 thereby promoting TRIM25 autoubiquitination and sequestration of the ligase into inactive protein aggregates. In turn, host RIGI is recruited to the complex but ubiquitination is severely impaired leading to inhibition of the pathway. Also catalyzes the removal of 'Lys-48'- and 'Lys-63'-linked ubiquitin chains on host TBK1 and STING1 suppressing cGAS-STING signaling in addition to the RIGI-MAVS pathway. Inhibits selective autophagy by deubiquitinating host SQSTM1. In turn, decreased SQSTM1 ubiquitination fails to recruit LC3 to SQSTM1-positive aggregates. In the host nucleus, deubiquitinates topoisomerase II subunits TOP2A and TOP2B thereby stabilizing SUMOylated TOP2 which halts the DNA damage response to TOP2-induced double strand DNA breaks and promotes cell survival. This Epstein-Barr virus (strain B95-8) (HHV-4) protein is Large tegument protein deneddylase.